A 61-amino-acid polypeptide reads, in one-letter code: Photosystem II reaction center protein K (61 aa).

A propeptide spanning residues 1-24 (MINIFSFICIYLHSALYSSSFFFG) is cleaved from the precursor. Residues 40–60 (MPVIPLFFFLLAFVWQAAVSF) form a helical membrane-spanning segment.

This sequence belongs to the PsbK family. As to quaternary structure, PSII is composed of 1 copy each of membrane proteins PsbA, PsbB, PsbC, PsbD, PsbE, PsbF, PsbH, PsbI, PsbJ, PsbK, PsbL, PsbM, PsbT, PsbX, PsbY, PsbZ, Psb30/Ycf12, at least 3 peripheral proteins of the oxygen-evolving complex and a large number of cofactors. It forms dimeric complexes.

Its subcellular location is the plastid. The protein resides in the chloroplast thylakoid membrane. Its function is as follows. One of the components of the core complex of photosystem II (PSII). PSII is a light-driven water:plastoquinone oxidoreductase that uses light energy to abstract electrons from H(2)O, generating O(2) and a proton gradient subsequently used for ATP formation. It consists of a core antenna complex that captures photons, and an electron transfer chain that converts photonic excitation into a charge separation. In Pelargonium hortorum (Common geranium), this protein is Photosystem II reaction center protein K.